The primary structure comprises 272 residues: Glutamate racemase (272 aa).

Residues 16–17 (DS) and 48–49 (YG) contribute to the substrate site. The active-site Proton donor/acceptor is the Cys-79. Residue 80-81 (NT) participates in substrate binding. Cys-191 (proton donor/acceptor) is an active-site residue. 192–193 (TH) provides a ligand contact to substrate.

The protein belongs to the aspartate/glutamate racemases family.

It catalyses the reaction L-glutamate = D-glutamate. Its pathway is cell wall biogenesis; peptidoglycan biosynthesis. Its function is as follows. Provides the (R)-glutamate required for cell wall biosynthesis. In Chlorobaculum parvum (strain DSM 263 / NCIMB 8327) (Chlorobium vibrioforme subsp. thiosulfatophilum), this protein is Glutamate racemase.